We begin with the raw amino-acid sequence, 667 residues long: Trifunctional UDP-glucose 4,6-dehydratase/UDP-4-keto-6-deoxy-D-glucose 3,5-epimerase/UDP-4-keto-L-rhamnose-reductase RHM2 (667 aa).

NAD(+) is bound at residue 15–21 (GAAGFIA). Thr134 is a substrate binding site. The active-site Proton donor is Asp135. Catalysis depends on proton acceptor residues Glu136 and Tyr161. 389-395 (GKTGWLG) contacts NADP(+).

It in the N-terminal section; belongs to the NAD(P)-dependent epimerase/dehydratase family. dTDP-glucose dehydratase subfamily. The protein in the C-terminal section; belongs to the dTDP-4-dehydrorhamnose reductase family. It depends on NAD(+) as a cofactor. NADP(+) is required as a cofactor. In terms of tissue distribution, expressed in roots, stems, leaves, seedlings, inflorescence tips, and siliques.

The catalysed reaction is UDP-alpha-D-glucose = UDP-4-dehydro-6-deoxy-alpha-D-glucose + H2O. It functions in the pathway carbohydrate biosynthesis. Functionally, trifunctional enzyme involved in UDP-beta-L-rhamnose biosynthesis, a precursor of the primary cell wall components rhamnogalacturonan I (RG-I) and rhamnogalacturonan II (RG-II). Catalyzes the dehydration of UDP-glucose to form UDP-4-dehydro-6-deoxy-D-glucose followed by the epimerization of the C3' and C5' positions of UDP-4-dehydro-6-deoxy-D-glucose to form UDP-4-keto-beta-L-rhamnose and the reduction of UDP-4-keto-beta-L-rhamnose to yield UDP-beta-L-rhamnose. Required for the normal seed coat epidermal development. The chain is Trifunctional UDP-glucose 4,6-dehydratase/UDP-4-keto-6-deoxy-D-glucose 3,5-epimerase/UDP-4-keto-L-rhamnose-reductase RHM2 from Arabidopsis thaliana (Mouse-ear cress).